The primary structure comprises 133 residues: Small ribosomal subunit protein uS8 (133 aa).

Belongs to the universal ribosomal protein uS8 family. As to quaternary structure, part of the 30S ribosomal subunit.

Functionally, one of the primary rRNA binding proteins, it binds directly to 16S rRNA central domain where it helps coordinate assembly of the platform of the 30S subunit. This is Small ribosomal subunit protein uS8 from Desulfurococcus amylolyticus (strain DSM 18924 / JCM 16383 / VKM B-2413 / 1221n) (Desulfurococcus kamchatkensis).